A 191-amino-acid chain; its full sequence is Putative glutathione-dependent formaldehyde-activating enzyme (191 aa).

Positions Phe20–Asp166 constitute a CENP-V/GFA domain. Positions 27, 29, 48, 50, 53, 95, and 98 each coordinate Zn(2+).

This sequence belongs to the Gfa family. It depends on Zn(2+) as a cofactor.

It catalyses the reaction S-(hydroxymethyl)glutathione = glutathione + formaldehyde. It functions in the pathway one-carbon metabolism; formaldehyde degradation; formate from formaldehyde (glutathione route): step 1/3. Functionally, catalyzes the condensation of formaldehyde and glutathione to S-hydroxymethylglutathione. In Aspergillus niger (strain ATCC MYA-4892 / CBS 513.88 / FGSC A1513), this protein is Putative glutathione-dependent formaldehyde-activating enzyme.